A 75-amino-acid polypeptide reads, in one-letter code: Rugosin-LK1 (75 aa).

The signal sequence occupies residues 1–22 (MFTMKKSLLFLFFLGTISLSFC). The propeptide occupies 23-40 (EEERSADEDDEGEMTEEE).

Expressed by the skin glands.

It is found in the secreted. In terms of biological role, has antimicrobial activity against Gram-positive bacteria S.aureus ATCC 2592 (MIC=10.0 uM), S.aureus ATCC 43300 (MIC=15.0 uM) and B.subtilis (MIC=40.0 uM), against Gram-negative bacteria E.coli ML-35P (MIC=10.0 uM), P.aeruginosa PA01 (MIC=5.0 uM) and P.aeruginosa ATCC 27853 (MIC=5.0 uM) and against fungus C.albicans ATCC 2002 (MIC=10.0 uM). The chain is Rugosin-LK1 from Limnonectes kuhlii (Kuhl's Creek frog).